We begin with the raw amino-acid sequence, 429 residues long: FAD-dependent monooxygenase azaH (429 aa).

Residues 5-25 (SIEVAIIGAGITGITLALGLL) form a helical membrane-spanning segment. Glu-35 and Gly-48 together coordinate FAD. N-linked (GlcNAc...) asparagine glycosylation is found at Asn-75 and Asn-87. Position 116 (Arg-116) interacts with FAD. Residue Arg-199 is part of the active site. 2 residues coordinate FAD: Asp-315 and Ala-328.

The protein belongs to the paxM FAD-dependent monooxygenase family. Requires FAD as cofactor.

It is found in the membrane. It functions in the pathway secondary metabolite biosynthesis. In terms of biological role, FAD-dependent monooxygenase; part of the gene cluster that mediates the biosynthesis of azaphilones, a class of fungal metabolites characterized by a highly oxygenated pyrano-quinone bicyclic core and exhibiting a broad range of bioactivities. In the first step, the non-reducing polyketide synthase azaA forms the hexaketide precursor from successive condensations of five malonyl-CoA units, presumably with a simple acetyl-CoA starter unit. The reactive polyketide chain then undergoes a PT-mediated C2-C7 cyclization to afford the aromatic ring and is eventually released as an aldehyde through the R-domain. The putative ketoreductase azaE is proposed to catalyze the reduction of the terminal ketone resulting in the early culture product FK17-P2a. The monooxygenase azaH was demonstrated to be the only enzyme required to convert FK17-P2a to azanigerone E. AzaH first hydroxylates the benzaldehyde intermediate FK17-P2a at C4, which triggers the formation of the pyran-ring to afford azanigerone E. In parallel, the 2,4-dimethylhexanoyl chain is synthesized by the HR-PKS azaB and is proposed to be transferred to the C4-hydroxyl of azanigerone E by the acyltransferase azaD directly from the ACP domain of azaB. Alternatively, the 2,4-dimethyl-hexanoyl chain may be offloaded from the HR-PKS as a carboxylic acid and converted to an acyl-CoA by azaF. The resulting acyl-CoA molecule could then be taken up as a substrate by AzaD to form azanigerone B. To yield the carboxylic acid substituent in azanigerone A, the hydroxypropyl side chain of azanigerone B would need to undergo a C-C oxidative cleavage catalyzed by cytochrome P450 AzaI. AzaI is proposed to act on a vicinal diol that leads to a C-C bond scission either through an alkoxyradical intermediate or a peroxy complex. In the biosynthesis of azanigerone A, azanigerone B first undergoes hydroxylation at C10, possibly catalyzed by one of the two FAD-dependent monooxygenases encoded in the cluster, azaG or azaL, resulting in the vicinal diol azanigerone C. Oxidative cleavage of azanigerone C by azaI would yield the corresponding aldehyde derivative of azanigerone A. Finally, the dehydrogenase azaJ is proposed to convert the aldehyde functional group into the carboxylic acid, completing the conversion from azanigerone B to azanigerone A. Alternatively, the oxidation of aldehyde to carboxylic acid may be catalyzed by the same P450 enzyme azaI via consecutive oxidation or by endogenous alcohol dehydrogenase. This chain is FAD-dependent monooxygenase azaH, found in Aspergillus niger (strain ATCC 1015 / CBS 113.46 / FGSC A1144 / LSHB Ac4 / NCTC 3858a / NRRL 328 / USDA 3528.7).